A 381-amino-acid polypeptide reads, in one-letter code: Arogenate dehydratase/prephenate dehydratase 2, chloroplastic (381 aa).

The disordered stretch occupies residues 1 to 32 (MAMHTVRLSPATQLHGGISSNLSPPNRKPNNS). The N-terminal 66 residues, 1–66 (MAMHTVRLSP…DANGRDNSVR (66 aa)), are a transit peptide targeting the chloroplast. Residues 18–32 (ISSNLSPPNRKPNNS) show a composition bias toward polar residues. In terms of domain architecture, Prephenate dehydratase spans 100-275 (RVAYQGVRGA…NVTRFLMLAR (176 aa)). The 87-residue stretch at 289–375 (SIVFSLEEGP…TFLRVLGSYP (87 aa)) folds into the ACT domain.

Expressed in roots, leaves, stems, flowers and siliques. Most abundant in leaves and seeds.

The protein localises to the plastid. Its subcellular location is the chloroplast stroma. The catalysed reaction is L-arogenate + H(+) = L-phenylalanine + CO2 + H2O. It catalyses the reaction prephenate + H(+) = 3-phenylpyruvate + CO2 + H2O. Its pathway is amino-acid biosynthesis; L-phenylalanine biosynthesis; L-phenylalanine from L-arogenate: step 1/1. It functions in the pathway amino-acid biosynthesis; L-phenylalanine biosynthesis; phenylpyruvate from prephenate: step 1/1. Functionally, converts the prephenate produced from the shikimate-chorismate pathway into phenylalanine. Dehydratase that uses arogenate and prephenate as substrates. Utilzes more efficiently arogenate than prephenate. Required for chloroplast division prior to ARC5, but in an ARC3- and ARC6-dependent manner, especially involved in the Z-ring formation. The chain is Arogenate dehydratase/prephenate dehydratase 2, chloroplastic from Arabidopsis thaliana (Mouse-ear cress).